A 332-amino-acid polypeptide reads, in one-letter code: Probable L-asparaginase (332 aa).

The region spanning 6–332 (PTIALLATGG…AKIQEMFEEY (327 aa)) is the Asparaginase/glutaminase domain. The O-isoaspartyl threonine intermediate role is filled by T16. Substrate contacts are provided by residues S62 and 95 to 96 (TD).

The protein belongs to the asparaginase 1 family.

The protein resides in the cytoplasm. It carries out the reaction L-asparagine + H2O = L-aspartate + NH4(+). The polypeptide is Probable L-asparaginase (ansA) (Helicobacter pylori (strain J99 / ATCC 700824) (Campylobacter pylori J99)).